Reading from the N-terminus, the 569-residue chain is 4-coumarate--CoA ligase 2 (569 aa).

Ser219, Ser220, Gly221, Thr222, Thr223, and Lys227 together coordinate ATP. Residues Phe269 and Ser273 each contribute to the (E)-4-coumaroyl-AMP site. Arg290 contributes to the CoA binding site. The tract at residues Glu292–Gln361 is SBD1. 5 residues coordinate (E)-4-coumaroyl-AMP: Ala339, Gln361, Gly362, Thr366, and Met374. Residues Gln361, Gly362, and Thr366 each contribute to the ATP site. Residues Gly362–Tyr429 are SBD2. ATP contacts are provided by Asp450 and Arg465. Residues Lys467 and Lys471 each coordinate (E)-4-coumaroyl-AMP. Positions 473 and 474 each coordinate CoA. Residue Lys556 participates in ATP binding.

The protein belongs to the ATP-dependent AMP-binding enzyme family. Mg(2+) serves as cofactor. Expressed in roots, stems, leaf blades, leaf sheaths and spikelets.

It carries out the reaction (E)-ferulate + ATP + CoA = (E)-feruloyl-CoA + AMP + diphosphate. The catalysed reaction is (E)-4-coumarate + ATP + CoA = (E)-4-coumaroyl-CoA + AMP + diphosphate. The enzyme catalyses (E)-caffeate + ATP + CoA = (E)-caffeoyl-CoA + AMP + diphosphate. It catalyses the reaction (E)-cinnamate + ATP + CoA = (E)-cinnamoyl-CoA + AMP + diphosphate. It carries out the reaction (E)-ferulate + ATP + H(+) = (E)-feruloyl-AMP + diphosphate. The catalysed reaction is (E)-feruloyl-AMP + CoA = (E)-feruloyl-CoA + AMP + H(+). The enzyme catalyses (E)-4-coumarate + ATP + H(+) = (E)-4-coumaroyl-AMP + diphosphate. It catalyses the reaction (E)-4-coumaroyl-AMP + CoA = (E)-4-coumaroyl-CoA + AMP + H(+). It carries out the reaction (E)-caffeate + ATP + H(+) = (E)-caffeoyl-AMP + diphosphate. The catalysed reaction is (E)-caffeoyl-AMP + CoA = (E)-caffeoyl-CoA + AMP + H(+). Its pathway is phytoalexin biosynthesis; 3,4',5-trihydroxystilbene biosynthesis; 3,4',5-trihydroxystilbene from trans-4-coumarate: step 1/2. Functionally, involved in the phenylpropanoid metabolism by mediating the activation of a number of hydroxycinnamates for the biosynthesis of monolignols and other phenolic secondary metabolites. Catalyzes the formation of CoA esters of cinnamate, 4-coumarate, caffeate and ferulate. Is more efficient with substrates in the following order: ferulate &gt; 4-coumarate &gt; caffeate &gt; cinnamate. Cannot convert sinapate to its corresponding CoA ester. Follows a two-step reaction mechanism, wherein the carboxylate substrate first undergoes adenylation by ATP, followed by a thioesterification in the presence of CoA to yield the final CoA thioester. The sequence is that of 4-coumarate--CoA ligase 2 from Oryza sativa subsp. japonica (Rice).